Here is a 787-residue protein sequence, read N- to C-terminus: Endonuclease MutS2 (787 aa).

334 to 341 (GPNTGGKT) lines the ATP pocket. Residues 712–787 (LDLRGKRYEE…GNGATIVTFK (76 aa)) enclose the Smr domain.

Belongs to the DNA mismatch repair MutS family. MutS2 subfamily. As to quaternary structure, homodimer. Binds to stalled ribosomes, contacting rRNA.

Endonuclease that is involved in the suppression of homologous recombination and thus may have a key role in the control of bacterial genetic diversity. Its function is as follows. Acts as a ribosome collision sensor, splitting the ribosome into its 2 subunits. Detects stalled/collided 70S ribosomes which it binds and splits by an ATP-hydrolysis driven conformational change. Acts upstream of the ribosome quality control system (RQC), a ribosome-associated complex that mediates the extraction of incompletely synthesized nascent chains from stalled ribosomes and their subsequent degradation. Probably generates substrates for RQC. This chain is Endonuclease MutS2, found in Latilactobacillus sakei subsp. sakei (strain 23K) (Lactobacillus sakei subsp. sakei).